Consider the following 134-residue polypeptide: MSWQAYVDDHLMCDIEGHEGHRLTAAAIVGHDGSVWAQSATFPQFKPEEMNGIMTDFNEPGHMAPTGLHLGGAKYMVIQGEAGAVIRGKKGSGGITIKKTGQALVFGIYEEPVTPGQCNMVVERLGDYLDEQGL.

Cys-13 and Cys-118 are disulfide-bonded. The Involved in PIP2 interaction motif lies at 84-100 (AVIRGKKGSGGITIKKT). A Phosphothreonine modification is found at Thr-114.

The protein belongs to the profilin family. Occurs in many kinds of cells as a complex with monomeric actin in a 1:1 ratio. In terms of processing, phosphorylated by MAP kinases.

The protein localises to the cytoplasm. The protein resides in the cytoskeleton. Its function is as follows. Binds to actin and affects the structure of the cytoskeleton. At high concentrations, profilin prevents the polymerization of actin, whereas it enhances it at low concentrations. This chain is Profilin-3, found in Olea europaea (Common olive).